Here is a 222-residue protein sequence, read N- to C-terminus: Transmembrane reductase CYB561D2 (222 aa).

At 2-17 the chain is on the cytoplasmic side; that stretch reads ALSAETESHIYRALRT. A Cytochrome b561 domain is found at 14-217; the sequence is ALRTASGAAA…NQVSNAYLYR (204 aa). A helical membrane pass occupies residues 18 to 38; it reads ASGAAAHLVALGFTIFVAVLA. Over 39 to 46 the chain is Lumenal; that stretch reads RPGSSLFS. A helical membrane pass occupies residues 47 to 67; it reads WHPVLMSLAFSFLMTEALLVF. His-48 serves as a coordination point for heme b. At 68 to 85 the chain is on the cytoplasmic side; sequence SPESSLLHSLSRKGRARC. Heme b is bound by residues His-86 and His-120. A helical membrane pass occupies residues 86 to 106; it reads HWVLQLLALLCALLGLGLVIL. At 107 to 122 the chain is on the lumenal side; that stretch reads HKEQLGKAHLVTRHGQ. Residues 123–143 traverse the membrane as a helical segment; it reads AGLLAVLWAGLQCSGGVGLLY. The Cytoplasmic portion of the chain corresponds to 144–162; that stretch reads PKLLPRWPLAKLKLYHATS. His-159 serves as a coordination point for heme b. Residues 163-183 traverse the membrane as a helical segment; sequence GLVGYLLGSASLLLGMCSLWF. Residues 184–186 lie on the Lumenal side of the membrane; sequence TAS. A helical membrane pass occupies residues 187 to 207; the sequence is VTGAAWYLAVLCPVLTSLVIM. Residues 208–222 are Cytoplasmic-facing; the sequence is NQVSNAYLYRKRIQP.

Heme b serves as cofactor.

Its subcellular location is the endoplasmic reticulum membrane. The protein localises to the cytoplasmic vesicle membrane. The catalysed reaction is monodehydro-L-ascorbate radical(out) + L-ascorbate(in) = monodehydro-L-ascorbate radical(in) + L-ascorbate(out). It catalyses the reaction Fe(3+)(out) + L-ascorbate(in) = monodehydro-L-ascorbate radical(in) + Fe(2+)(out) + H(+). Functionally, transmembrane reductase that may use ascorbate as an electron donor in the cytoplasm and transfer electrons across endoplasmic reticulum membranes to reduce monodehydro-L-ascorbate radical and iron cations Fe(3+) in the lumen of that compartment. This chain is Transmembrane reductase CYB561D2, found in Homo sapiens (Human).